The sequence spans 528 residues: ATP synthase subunit alpha (528 aa).

169–176 serves as a coordination point for ATP; it reads GDRQTGKT.

The protein belongs to the ATPase alpha/beta chains family. In terms of assembly, F-type ATPases have 2 components, CF(1) - the catalytic core - and CF(0) - the membrane proton channel. CF(1) has five subunits: alpha(3), beta(3), gamma(1), delta(1), epsilon(1). CF(0) has three main subunits: a(1), b(2) and c(9-12). The alpha and beta chains form an alternating ring which encloses part of the gamma chain. CF(1) is attached to CF(0) by a central stalk formed by the gamma and epsilon chains, while a peripheral stalk is formed by the delta and b chains.

The protein localises to the cell membrane. The catalysed reaction is ATP + H2O + 4 H(+)(in) = ADP + phosphate + 5 H(+)(out). Produces ATP from ADP in the presence of a proton gradient across the membrane. The alpha chain is a regulatory subunit. The protein is ATP synthase subunit alpha of Mycoplasmopsis agalactiae (strain NCTC 10123 / CIP 59.7 / PG2) (Mycoplasma agalactiae).